The sequence spans 1168 residues: Probable serine/threonine protein kinase IRE (1168 aa).

2 disordered regions span residues 1-165 and 377-444; these read MSTT…GVES and EKQN…KIQP. Residues 16-25 show a composition bias toward low complexity; it reads PTTISTPTST. 2 stretches are compositionally biased toward basic and acidic residues: residues 39 to 54 and 107 to 130; these read RHSD…KTDE and QDDK…DARA. 2 stretches are compositionally biased toward polar residues: residues 146–163 and 401–414; these read QWSQ…NPGV and TARS…NFRM. A C2H2-type; atypical zinc finger spans residues 488–507; that stretch reads CRICEVEIPVVHVEEHSRIC. Disordered regions lie at residues 546–566, 602–622, and 717–744; these read PRAV…DLDE, GTKD…PRNS, and SSNA…LNPR. In terms of domain architecture, Protein kinase spans 754-1043; sequence FEIIKPISRG…AGEVKQHHFF (290 aa). ATP contacts are provided by residues 760 to 768 and Lys-783; that span reads ISRGAFGRV. The Proton acceptor role is filled by Asp-877. The AGC-kinase C-terminal domain maps to 1044-1144; it reads KDINWDTLAR…KNLSQLASIN (101 aa).

Belongs to the protein kinase superfamily. AGC Ser/Thr protein kinase family. As to expression, highly expressed in roots, elongating root hair cells and pollen grains.

The catalysed reaction is L-seryl-[protein] + ATP = O-phospho-L-seryl-[protein] + ADP + H(+). It carries out the reaction L-threonyl-[protein] + ATP = O-phospho-L-threonyl-[protein] + ADP + H(+). Modulates root tip growth. May play a common role in the tip growth of plant cells. This chain is Probable serine/threonine protein kinase IRE, found in Arabidopsis thaliana (Mouse-ear cress).